Here is a 343-residue protein sequence, read N- to C-terminus: Selenide, water dikinase (343 aa).

C15 is a catalytic residue. Residues K18 and 46–48 (HKD) contribute to the ATP site. D49 lines the Mg(2+) pocket. ATP contacts are provided by residues D66, D89, and 137 to 139 (GHS). D89 is a Mg(2+) binding site. Position 225 (D225) interacts with Mg(2+).

It belongs to the selenophosphate synthase 1 family. Class I subfamily. In terms of assembly, homodimer. The cofactor is Mg(2+).

It carries out the reaction hydrogenselenide + ATP + H2O = selenophosphate + AMP + phosphate + 2 H(+). Synthesizes selenophosphate from selenide and ATP. In Sulfurimonas denitrificans (strain ATCC 33889 / DSM 1251) (Thiomicrospira denitrificans (strain ATCC 33889 / DSM 1251)), this protein is Selenide, water dikinase.